The following is a 206-amino-acid chain: Erythropoietin (206 aa).

Residues 1-40 form the signal peptide; the sequence is MCEPAPPKPTQSAWHSFPECPALLLLLSLLLLPLGLPVLG. 2 disulfide bridges follow: C47–C201 and C69–C73. The N-linked (GlcNAc...) asparagine glycan is linked to N64. Residues N78 and N123 are each glycosylated (N-linked (GlcNAc...) asparagine).

This sequence belongs to the EPO/TPO family. As to expression, produced by kidney or liver of adult mammals and by liver of fetal or neonatal mammals.

It localises to the secreted. Functionally, hormone involved in the regulation of erythrocyte proliferation and differentiation and the maintenance of a physiological level of circulating erythrocyte mass. Binds to EPOR leading to EPOR dimerization and JAK2 activation thereby activating specific downstream effectors, including STAT1 and STAT3. The polypeptide is Erythropoietin (EPO) (Canis lupus familiaris (Dog)).